Reading from the N-terminus, the 121-residue chain is Large ribosomal subunit protein bL19 (121 aa).

This sequence belongs to the bacterial ribosomal protein bL19 family.

This protein is located at the 30S-50S ribosomal subunit interface and may play a role in the structure and function of the aminoacyl-tRNA binding site. The chain is Large ribosomal subunit protein bL19 from Mesomycoplasma hyopneumoniae (strain 7448) (Mycoplasma hyopneumoniae).